Reading from the N-terminus, the 429-residue chain is Type II methyltransferase M.AgeI (429 aa).

Residues 1–429 form the SAM-dependent MTase C5-type domain; the sequence is MKTIDLFCGA…MAETIKVAIS (429 aa). The active site involves cysteine 80.

This sequence belongs to the class I-like SAM-binding methyltransferase superfamily. C5-methyltransferase family.

It carries out the reaction a 2'-deoxycytidine in DNA + S-adenosyl-L-methionine = a 5-methyl-2'-deoxycytidine in DNA + S-adenosyl-L-homocysteine + H(+). Functionally, a methylase, recognizes the double-stranded sequence 5'-ACCGGT-3', methylates C-3 on both strands, and protects the DNA from cleavage by the AgeI endonuclease. In Thalassovita gelatinovora (Thalassobius gelatinovorus), this protein is Type II methyltransferase M.AgeI (ageIM).